The sequence spans 283 residues: Myeloid differentiation primary response protein MyD88-B (283 aa).

Residues 27–105 form the Death domain; it reads RLCLYLNPNA…DILTDLAPLI (79 aa). Residues 106-143 form an intermediate domain region; it reads EADCKKYLEKKHGPLPLQDDNVDSSEQYRITKSDDPYG. The region spanning 147 to 281 is the TIR domain; it reads ETFDAFICCC…WFWDKLAKAL (135 aa).

The protein localises to the cytoplasm. Its function is as follows. Adapter protein involved in the Toll-like receptor and IL-1 receptor signaling pathway in the innate immune response. Activates expression of target genes in the Spemann organizer region during early embryonic development. Is required for normal axis formation. The protein is Myeloid differentiation primary response protein MyD88-B (myd88-b) of Xenopus laevis (African clawed frog).